Here is a 1213-residue protein sequence, read N- to C-terminus: DNA-directed RNA polymerase subunit beta' (1213 aa).

Positions 60, 62, 75, and 78 each coordinate Zn(2+). Mg(2+) contacts are provided by D450, D452, and D454. Residues C819, C893, C900, and C903 each contribute to the Zn(2+) site.

It belongs to the RNA polymerase beta' chain family. The RNAP catalytic core consists of 2 alpha, 1 beta, 1 beta' and 1 omega subunit. When a sigma factor is associated with the core the holoenzyme is formed, which can initiate transcription. The cofactor is Mg(2+). Zn(2+) is required as a cofactor.

It catalyses the reaction RNA(n) + a ribonucleoside 5'-triphosphate = RNA(n+1) + diphosphate. DNA-dependent RNA polymerase catalyzes the transcription of DNA into RNA using the four ribonucleoside triphosphates as substrates. This chain is DNA-directed RNA polymerase subunit beta', found in Streptococcus pyogenes serotype M28 (strain MGAS6180).